The primary structure comprises 620 residues: UDP-glucose:protein N-beta-glucosyltransferase (620 aa).

Belongs to the glycosyltransferase 41 family.

The protein localises to the cytoplasm. It catalyses the reaction L-asparaginyl-[protein] + UDP-alpha-D-glucose = N(4)-(beta-D-glucosyl)-L-asparaginyl-[protein] + UDP + H(+). The protein operates within protein modification; protein glycosylation. Functionally, inverting glycosyltransferase that catalyzes the transfer of one glucose moiety from UDP-glucose to an asparagine residue in peptides and proteins containing the NX(S/T) motif, resulting in their modification with a beta-linked 1,N-glucose. Likely acts as a key component of a general protein glycosylation system. The chain is UDP-glucose:protein N-beta-glucosyltransferase from Actinobacillus pleuropneumoniae serotype 5b (strain L20).